Here is a 142-residue protein sequence, read N- to C-terminus: Large ribosomal subunit protein uL13 (142 aa).

The protein belongs to the universal ribosomal protein uL13 family. In terms of assembly, part of the 50S ribosomal subunit.

This protein is one of the early assembly proteins of the 50S ribosomal subunit, although it is not seen to bind rRNA by itself. It is important during the early stages of 50S assembly. The polypeptide is Large ribosomal subunit protein uL13 (Herminiimonas arsenicoxydans).